The following is a 167-amino-acid chain: uncharacterized protein (167 aa).

This is an uncharacterized protein from Magallana gigas (Pacific oyster).